The primary structure comprises 277 residues: MSSCSRVALVTGANKGIGFAITRDLCRKFSGDVVLTARDEARGRAAVQQLQAEGLSPRFHQLDIDDPQSIRALRDFLRKEYGGLNVLVNNAGIAFRMDDPTPFDIQAEVTLKTNFFATRNVCTELLPIMKPHGRVVNISSLQGLKALENCREDLQEKFRCDTLTEVDLVDLMKKFVEDTKNEVHEREGWPDSAYGVSKLGVTVLTRILARQLDEKRKADRILLNACCPGWVKTDMARDQGSRTVEEGAETPVYLALLPPDATEPHGQLVRDKVVQTW.

N-acetylserine is present on serine 2. NADP(+) is bound by residues 10 to 34, 38 to 42, 63 to 64, and asparagine 90; these read VTGA…GDVV, RDEAR, and DI. The residue at position 30 (serine 30) is a Phosphoserine. Serine 140 lines the substrate pocket. Tyrosine 194 acts as the Proton acceptor in catalysis. Residue 194–198 coordinates NADP(+); that stretch reads YGVSK.

This sequence belongs to the short-chain dehydrogenases/reductases (SDR) family.

It localises to the cytoplasm. It carries out the reaction a secondary alcohol + NADP(+) = a ketone + NADPH + H(+). The catalysed reaction is a quinone + NADPH + H(+) = a quinol + NADP(+). Catalyzes the NADPH-dependent reduction of carbonyl compounds to their corresponding alcohols. Has low NADPH-dependent oxidoreductase activity. Acts on several orthoquinones, as well as on non-quinone compounds, such as isatin or on the anticancer drug oracin. Best substrates for CBR3 is 1,2- naphthoquinone, hence could play a role in protection against cytotoxicity of exogenous quinones. Exerts activity toward ortho-quinones but not paraquinones. No endogenous substrate for CBR3 except isatin has been identified. The polypeptide is Carbonyl reductase [NADPH] 3 (Cbr3) (Mus musculus (Mouse)).